Here is a 1096-residue protein sequence, read N- to C-terminus: Constitutive coactivator of PPAR-gamma-like protein 2 (1096 aa).

A compositionally biased stretch (low complexity) spans 35–59; that stretch reads QQQHLHRQLPPTAALAPGAPRAARG. Disordered regions lie at residues 35-113, 508-579, and 971-1096; these read QQQH…PPQL, NYLP…DGEP, and SRSS…RKED. Omega-N-methylarginine is present on Arg58. Over residues 82 to 95 the composition is skewed to basic residues; sequence TRHHHPAHHFHHHG. Residues 101–113 show a composition bias toward pro residues; the sequence is LHPPLPPPPPPQL. Positions 540 to 559 are enriched in basic and acidic residues; it reads HITEAFHHQPEWGNPNRDRG. Position 977 is an omega-N-methylarginine (Arg977). Basic and acidic residues-rich tracts occupy residues 1041-1050 and 1076-1096; these read IKEEKSDHRL and NREKNHLQEQKLETVAQRKED. Residue Lys1042 forms a Glycyl lysine isopeptide (Lys-Gly) (interchain with G-Cter in SUMO2) linkage.

It belongs to the constitutive coactivator of PPAR-gamma family. As to expression, expressed at low levels in a number of tissues.

This chain is Constitutive coactivator of PPAR-gamma-like protein 2 (FAM120C), found in Homo sapiens (Human).